A 2278-amino-acid chain; its full sequence is Genome polyprotein (2278 aa).

One can recognise an SF3 helicase domain in the interval 454–609; it reads LESTANSIRS…EDWKKKNPGK (156 aa). Position 481–488 (481–488) interacts with ATP; that stretch reads GPPGIGKT. The tract at residues 939 to 958 is disordered; sequence EEAKGKTKHGRGAKHARRGG. Positions 944-956 are enriched in basic residues; the sequence is KTKHGRGAKHARR. Tyr-966 is modified (O-(5'-phospho-RNA)-tyrosine). Residues 1056 to 1204 enclose the Peptidase C24 domain; that stretch reads APTPIVTFTS…TKLAQRVTKT (149 aa). Active-site for 3CLpro activity residues include His-1086, Glu-1107, and Cys-1171. Positions 1443–1568 constitute a RdRp catalytic domain; it reads GVLYCLDYSK…SVCPATASIF (126 aa).

As to quaternary structure, homodimer. Homomultimer. In terms of processing, specific enzymatic cleavages in vivo yield mature proteins. Pro-Pol is first autocatalytically cleaved, then processes the whole polyprotein. VPg is uridylylated by the polymerase and is covalently attached to the 5'-end of the polyadenylated genomic and subgenomic RNAs. This uridylylated form acts as a nucleotide-peptide primer for the polymerase.

The protein resides in the virion. Its subcellular location is the host cytoplasm. The enzyme catalyses a ribonucleoside 5'-triphosphate + H2O = a ribonucleoside 5'-diphosphate + phosphate + H(+). It carries out the reaction RNA(n) + a ribonucleoside 5'-triphosphate = RNA(n+1) + diphosphate. It catalyses the reaction Endopeptidase with a preference for cleavage when the P1 position is occupied by Glu-|-Xaa and the P1' position is occupied by Gly-|-Yaa.. Its function is as follows. Together with NTPase and NS4, initiates the formation of the replication complex. Induces the proliferation of the host smooth ER membranes forming long tubular structures. These remodeled membranes probably form the viral factories that contain the replication complex. Displays NTPase activity, but no helicase activity. Induces the formation of convoluted membranes derived from the host ER. These remodeled membranes probably form the viral factories that contain the replication complex. Together with NS2 and NS4, initiates the formation of the replication complex. In terms of biological role, probable key protein responsible for the formation of membrane alterations by the virus. Induces the formation of convoluted membranes derived from the host ER. These remodeled membranes probably form the viral factories that contain the replication complex. Together with NS2 and NTPase, initiates the formation of the replication complex. Functionally, viral genome-linked protein is covalently linked to the 5'-end of the positive-strand, negative-strand genomic RNAs and subgenomic RNA. Acts as a genome-linked replication primer. May recruit ribosome to viral RNA thereby promoting viral proteins translation. Interacts with host translation initiation complex to allow the translation of viral proteins. Its function is as follows. Protease-polymerase p76 processes the polyprotein: Pro-Pol is first released by autocleavage, then all other proteins are cleaved. Cleaves host translation initiation factor eIF4G1, eIF4G2 and PABP1 thereby inducing a shutdown of host protein synthesis. This shutdown may not prevent viral mRNA from being translated since viral Vpg replaces the cap. It is also an RNA-directed RNA polymerase which replicates genomic and antigenomic viral RNA by recognizing specific signals. Also transcribes a subgenomic mRNA by initiating RNA synthesis internally on antigenomic RNA. This sgRNA codes for structural proteins. Catalyzes the covalent attachment VPg with viral RNAs. Capsid protein self assembles to form an icosahedral capsid with a T=3 symmetry, about 38 nm in diameter, and consisting of 180 capsid proteins. The capsid encapsulate the genomic RNA and VP2 proteins. Attaches virion to target cells, inducing endocytosis of the viral particle. Acidification of the endosome induces conformational change of capsid protein thereby injecting virus genomic RNA into host cytoplasm. This is Genome polyprotein from Homo sapiens (Human).